The sequence spans 310 residues: Olfactory receptor 5P1 (310 aa).

At 1-25 (MEPGNHTAVTKFILLGLTDDPTLCV) the chain is on the extracellular side. Asn5 is a glycosylation site (N-linked (GlcNAc...) asparagine). The chain crosses the membrane as a helical span at residues 26–46 (IFFVFFLGIYIVTLVGNISII). At 47–54 (NLVRSCPQ) the chain is on the cytoplasmic side. Residues 55–75 (LQTPMYMFLSHLAFVDIGYST) form a helical membrane-spanning segment. Residues 76–99 (SVTPIMLIGFIVHETGLPVHACEA) are Extracellular-facing. A disulfide bridge connects residues Cys97 and Cys189. The helical transmembrane segment at 100–120 (QLCSVVTFGTAECFLLAAMAY) threads the bilayer. At 121-133 (DRYVAICSPLLYS) the chain is on the cytoplasmic side. The helical transmembrane segment at 134–154 (THMSSQICLLLVGASYVGGCV) threads the bilayer. Residues 155–196 (NAWTFTGCLLSLSFCGPNKIDHFFCDFSPLLKLSCSDVSIIG) lie on the Extracellular side of the membrane. A helical membrane pass occupies residues 197–217 (IIPSISAGSIIVVTVFVISVS). Residues 218–237 (YIYILITILKMRSTEGRHKA) are Cytoplasmic-facing. Residues 238–258 (FSTCTSHLTAVTLYYGTITFI) traverse the membrane as a helical segment. Residues 259-271 (YVMPKSSYSTKQN) are Extracellular-facing. The chain crosses the membrane as a helical span at residues 272–292 (RVVSLFYTVVIPMLNPLIYSL). Residues 293 to 310 (RNRDVKEALRKATLRIYS) are Cytoplasmic-facing.

This sequence belongs to the G-protein coupled receptor 1 family.

It is found in the cell membrane. Its function is as follows. Potential odorant receptor. The polypeptide is Olfactory receptor 5P1 (Mus musculus (Mouse)).